We begin with the raw amino-acid sequence, 89 residues long: Large ribosomal subunit protein bL31B (89 aa).

Belongs to the bacterial ribosomal protein bL31 family. Type B subfamily. In terms of assembly, part of the 50S ribosomal subunit.

The protein is Large ribosomal subunit protein bL31B of Aeromonas hydrophila subsp. hydrophila (strain ATCC 7966 / DSM 30187 / BCRC 13018 / CCUG 14551 / JCM 1027 / KCTC 2358 / NCIMB 9240 / NCTC 8049).